A 155-amino-acid chain; its full sequence is Ribosomal RNA large subunit methyltransferase H (155 aa).

S-adenosyl-L-methionine is bound by residues L72, G103, and 122–127 (LSPLTL).

The protein belongs to the RNA methyltransferase RlmH family. In terms of assembly, homodimer.

The protein resides in the cytoplasm. It carries out the reaction pseudouridine(1915) in 23S rRNA + S-adenosyl-L-methionine = N(3)-methylpseudouridine(1915) in 23S rRNA + S-adenosyl-L-homocysteine + H(+). Functionally, specifically methylates the pseudouridine at position 1915 (m3Psi1915) in 23S rRNA. The chain is Ribosomal RNA large subunit methyltransferase H from Actinobacillus pleuropneumoniae serotype 3 (strain JL03).